We begin with the raw amino-acid sequence, 212 residues long: 2-dehydro-3-deoxy-phosphogluconate aldolase (212 aa).

Glutamate 45 (proton acceptor) is an active-site residue. Pyruvate contacts are provided by arginine 49, threonine 73, and lysine 133. The Schiff-base intermediate with substrate role is filled by lysine 133.

The protein belongs to the KHG/KDPG aldolase family. As to quaternary structure, homotrimer.

The protein localises to the cytoplasm. The enzyme catalyses 2-dehydro-3-deoxy-6-phospho-D-gluconate = D-glyceraldehyde 3-phosphate + pyruvate. It participates in carbohydrate acid metabolism; 2-dehydro-3-deoxy-D-gluconate degradation; D-glyceraldehyde 3-phosphate and pyruvate from 2-dehydro-3-deoxy-D-gluconate: step 2/2. Functionally, involved in the degradation of glucose via the Entner-Doudoroff pathway. Catalyzes the reversible, stereospecific retro-aldol cleavage of 2-keto-3-deoxy-6-phosphogluconate (KDPG) to pyruvate and D-glyceraldehyde-3-phosphate. This is 2-dehydro-3-deoxy-phosphogluconate aldolase (eda) from Haemophilus influenzae (strain ATCC 51907 / DSM 11121 / KW20 / Rd).